Reading from the N-terminus, the 108-residue chain is Tetrahydromethanopterin S-methyltransferase subunit B (108 aa).

A helical membrane pass occupies residues 79–99 (GMFFGFWVTMAILVLVTILAV).

The protein belongs to the MtrB family. As to quaternary structure, the complex is composed of 8 subunits; MtrA, MtrB, MtrC, MtrD, MtrE, MtrF, MtrG and MtrH.

Its subcellular location is the cell membrane. It catalyses the reaction 5-methyl-5,6,7,8-tetrahydromethanopterin + coenzyme M + 2 Na(+)(in) = 5,6,7,8-tetrahydromethanopterin + methyl-coenzyme M + 2 Na(+)(out). It functions in the pathway one-carbon metabolism; methanogenesis from CO(2); methyl-coenzyme M from 5,10-methylene-5,6,7,8-tetrahydromethanopterin: step 2/2. Its function is as follows. Part of a complex that catalyzes the formation of methyl-coenzyme M and tetrahydromethanopterin from coenzyme M and methyl-tetrahydromethanopterin. This is an energy-conserving, sodium-ion translocating step. The protein is Tetrahydromethanopterin S-methyltransferase subunit B of Methanococcus maripaludis (strain C5 / ATCC BAA-1333).